A 258-amino-acid chain; its full sequence is Thiazole synthase (258 aa).

Catalysis depends on lysine 97, which acts as the Schiff-base intermediate with DXP. 1-deoxy-D-xylulose 5-phosphate is bound by residues glycine 158, 184–185 (AG), and 206–207 (NT).

It belongs to the ThiG family. In terms of assembly, homotetramer. Forms heterodimers with either ThiH or ThiS.

The protein resides in the cytoplasm. The catalysed reaction is [ThiS sulfur-carrier protein]-C-terminal-Gly-aminoethanethioate + 2-iminoacetate + 1-deoxy-D-xylulose 5-phosphate = [ThiS sulfur-carrier protein]-C-terminal Gly-Gly + 2-[(2R,5Z)-2-carboxy-4-methylthiazol-5(2H)-ylidene]ethyl phosphate + 2 H2O + H(+). It participates in cofactor biosynthesis; thiamine diphosphate biosynthesis. Catalyzes the rearrangement of 1-deoxy-D-xylulose 5-phosphate (DXP) to produce the thiazole phosphate moiety of thiamine. Sulfur is provided by the thiocarboxylate moiety of the carrier protein ThiS. In vitro, sulfur can be provided by H(2)S. This Bacteroides fragilis (strain ATCC 25285 / DSM 2151 / CCUG 4856 / JCM 11019 / LMG 10263 / NCTC 9343 / Onslow / VPI 2553 / EN-2) protein is Thiazole synthase.